A 961-amino-acid chain; its full sequence is Vinculin (961 aa).

Repeat copies occupy residues 258-362 and 371-470. The tract at residues 258–470 is 2 X repeats; it reads ELDNLTVLKK…LTQKLYELKA (213 aa). The tract at residues 720 to 778 is disordered; the sequence is AIAPPQPPPLPTSLPPPIPELSALHLSNQNAERAPPRPPLPREGLAPVRPPPPETDDED. The span at 723-738 shows a compositional bias: pro residues; it reads PPQPPPLPTSLPPPIP. Residue Thr774 is modified to Phosphothreonine.

This sequence belongs to the vinculin/alpha-catenin family. In terms of assembly, exhibits self-association properties.

It is found in the cytoplasm. It localises to the cytoskeleton. The protein resides in the cell junction. The protein localises to the adherens junction. Its subcellular location is the cell membrane. In terms of biological role, involved in cell adhesion. May be involved in the attachment of the actin-based microfilaments to the plasma membrane. The chain is Vinculin (Vinc) from Drosophila melanogaster (Fruit fly).